Reading from the N-terminus, the 426-residue chain is Eukaryotic translation initiation factor 3 subunit M (426 aa).

In terms of domain architecture, PCI spans 179–350 (DDEDSYRYLI…KVFLVHRTTY (172 aa)). Residues 385-401 (DVEGQREREQQELERKL) show a composition bias toward basic and acidic residues. A disordered region spans residues 385–426 (DVEGQREREQQELERKLAGAGMGGGPGGDRRRQQKPRTDEDD).

This sequence belongs to the eIF-3 subunit M family. As to quaternary structure, component of the eukaryotic translation initiation factor 3 (eIF-3) complex.

It localises to the cytoplasm. In terms of biological role, component of the eukaryotic translation initiation factor 3 (eIF-3) complex, which is involved in protein synthesis of a specialized repertoire of mRNAs and, together with other initiation factors, stimulates binding of mRNA and methionyl-tRNAi to the 40S ribosome. The eIF-3 complex specifically targets and initiates translation of a subset of mRNAs involved in cell proliferation. The polypeptide is Eukaryotic translation initiation factor 3 subunit M (Chaetomium globosum (strain ATCC 6205 / CBS 148.51 / DSM 1962 / NBRC 6347 / NRRL 1970) (Soil fungus)).